Consider the following 177-residue polypeptide: Tubulin beta chain (177 aa).

A disordered region spans residues 156 to 177 (YQDATAEEEGEFDEEEGDEEAA). Over residues 160 to 177 (TAEEEGEFDEEEGDEEAA) the composition is skewed to acidic residues.

Belongs to the tubulin family. As to quaternary structure, dimer of alpha and beta chains. A typical microtubule is a hollow water-filled tube with an outer diameter of 25 nm and an inner diameter of 15 nM. Alpha-beta heterodimers associate head-to-tail to form protofilaments running lengthwise along the microtubule wall with the beta-tubulin subunit facing the microtubule plus end conferring a structural polarity. Microtubules usually have 13 protofilaments but different protofilament numbers can be found in some organisms and specialized cells. Mg(2+) serves as cofactor.

It is found in the cytoplasm. Its subcellular location is the cytoskeleton. Functionally, tubulin is the major constituent of microtubules, a cylinder consisting of laterally associated linear protofilaments composed of alpha- and beta-tubulin heterodimers. Microtubules grow by the addition of GTP-tubulin dimers to the microtubule end, where a stabilizing cap forms. Below the cap, tubulin dimers are in GDP-bound state, owing to GTPase activity of alpha-tubulin. The protein is Tubulin beta chain of Lytechinus pictus (Painted sea urchin).